The sequence spans 456 residues: UPF0210 protein Dde_3704 (456 aa).

The protein belongs to the UPF0210 family. Homodimer.

The polypeptide is UPF0210 protein Dde_3704 (Oleidesulfovibrio alaskensis (strain ATCC BAA-1058 / DSM 17464 / G20) (Desulfovibrio alaskensis)).